The primary structure comprises 149 residues: uncharacterized protein (149 aa).

The disordered stretch occupies residues 34–94 (HTPCLPKVPR…NPIGSQRIHS (61 aa)). Over residues 56–66 (QSPHRQGDRRR) the composition is skewed to basic and acidic residues.

It is found in the mitochondrion. This is an uncharacterized protein from Arabidopsis thaliana (Mouse-ear cress).